We begin with the raw amino-acid sequence, 1133 residues long: Protein cordon-bleu (1133 aa).

A compositionally biased stretch (pro residues) spans 1 to 11 (MKARAPPPPGK). Residues 1–25 (MKARAPPPPGKPAAQNVHSEQKLPH) form a disordered region. A phosphoserine mark is found at serine 31, serine 34, serine 196, serine 219, serine 256, and serine 278. Disordered regions lie at residues 246-393 (AEHL…SVNG) and 442-568 (QGGI…GQAS). Residues 272 to 301 (CVTTPNSPSLHSRSLTLGPSLSLGNISGMS) are compositionally biased toward polar residues. The short motif at 307–312 (KKRRAP) is the KKRRAP 1 element. Residues serine 330 and serine 333 each carry the phosphoserine modification. Residues 340–345 (KKRRAP) carry the KKRRAP 2 motif. Residues 345–358 (PAPPPPQPPPPSPV) show a composition bias toward pro residues. The residue at position 356 (serine 356) is a Phosphoserine. The span at 361-371 (NRKEDKEENRK) shows a compositional bias: basic and acidic residues. Composition is skewed to polar residues over residues 382–393 (TDTSSLTSSVNG) and 442–464 (QGGI…QPFI). Serine 447 carries the phosphoserine modification. Residues 512–524 (STDDPKAKDKDKM) are compositionally biased toward basic and acidic residues. Serine 614 carries the post-translational modification Phosphoserine. Residues 664–720 (APSTTITATSEKPQRDETKAGFTLTTPEQQPASQEYGAPPEEDRSRPHSAVSCPVKV) are disordered. 2 stretches are compositionally biased toward polar residues: residues 665 to 674 (PSTTITATSE) and 686 to 696 (TLTTPEQQPAS). Serine 924 is modified (phosphoserine). Disordered stretches follow at residues 942-961 (PSPL…SSIF) and 990-1018 (HTSG…YVEA). WH2 domains follow at residues 981 to 1001 (LHSA…LRKT) and 1021 to 1041 (ERSA…LRKV). Over residues 993–1010 (GGRDKLRKTAEQASEGRP) the composition is skewed to basic and acidic residues. The interval 1063–1091 (DKPQQEDRGLPPPPALPPPSTPASQVPSA) is disordered. The segment covering 1072–1083 (LPPPPALPPPST) has biased composition (pro residues). Serine 1099 carries the phosphoserine modification. The region spanning 1109 to 1129 (ARQALMDAIRSGTGAARLRKV) is the WH2 3 domain.

Identified in a complex composed of ACTA1, COBL, GSN AND TMSB4X. Identified in a complex composed of COBL, PACSIN1 and WASL. Interacts with PACSIN1, PACSIN2 and PACSIN3. Interacts (via WH2 domains) with actin monomers. Interacts with both PACSIN1 and DBNL. As to expression, detected in brain (at protein level).

It localises to the cell membrane. It is found in the cytoplasm. The protein localises to the cytoskeleton. The protein resides in the cell projection. Its subcellular location is the ruffle. It localises to the cytosol. Plays an important role in the reorganization of the actin cytoskeleton. Binds to and sequesters actin monomers (G actin). Nucleates actin polymerization by assembling three actin monomers in cross-filament orientation and thereby promotes growth of actin filaments at the barbed end. Can also mediate actin depolymerization at barbed ends and severing of actin filaments. Promotes formation of cell ruffles. Regulates dendrite branching in Purkinje cells. Regulates neuron morphogenesis and increases branching of axons and dendrites. This chain is Protein cordon-bleu (Cobl), found in Rattus norvegicus (Rat).